The primary structure comprises 1198 residues: Fibronectin type-III domain-containing protein 3A (1198 aa).

Residues 188-201 (KKLKDRQGTQKDKM) show a composition bias toward basic and acidic residues. Positions 188 to 257 (KKLKDRQGTQ…VDPEMEEKDE (70 aa)) are disordered. A phosphoserine mark is found at Ser-203, Ser-207, and Ser-213. 9 consecutive Fibronectin type-III domains span residues 268–369 (NIVK…TLSC), 373–465 (PPNA…TSGC), 469–562 (VPAS…TCPD), 566–660 (VPVK…TPAV), 664–757 (PCLP…TAPG), 761–851 (QCRP…TPPS), 863–950 (SDDD…TKPL), 951–1045 (PPDP…TPKS), and 1049–1151 (ALKA…TEPP). An N6-acetyllysine modification is found at Lys-384. A helical membrane pass occupies residues 1177–1197 (ILVVFAFFSILIAFIIQYFVI).

Belongs to the FNDC3 family. Testis. Localizes to the acrosome of spermatids, as well as to Leydig cells. Can be detected on the acrosome beginning at steps 2-3 and continuing until step 12 of spermiogenesis.

It localises to the golgi apparatus membrane. In terms of biological role, mediates spermatid-Sertoli adhesion during spermatogenesis. The chain is Fibronectin type-III domain-containing protein 3A (Fndc3a) from Mus musculus (Mouse).